Here is a 201-residue protein sequence, read N- to C-terminus: 3-isopropylmalate dehydratase small subunit (201 aa).

Belongs to the LeuD family. LeuD type 1 subfamily. Heterodimer of LeuC and LeuD.

It carries out the reaction (2R,3S)-3-isopropylmalate = (2S)-2-isopropylmalate. It participates in amino-acid biosynthesis; L-leucine biosynthesis; L-leucine from 3-methyl-2-oxobutanoate: step 2/4. Catalyzes the isomerization between 2-isopropylmalate and 3-isopropylmalate, via the formation of 2-isopropylmaleate. The polypeptide is 3-isopropylmalate dehydratase small subunit (Ruegeria sp. (strain TM1040) (Silicibacter sp.)).